A 923-amino-acid chain; its full sequence is Phosphoenolpyruvate carboxylase (923 aa).

Catalysis depends on residues His-149 and Lys-585.

This sequence belongs to the PEPCase type 1 family. Mg(2+) serves as cofactor.

It catalyses the reaction oxaloacetate + phosphate = phosphoenolpyruvate + hydrogencarbonate. Its function is as follows. Forms oxaloacetate, a four-carbon dicarboxylic acid source for the tricarboxylic acid cycle. The chain is Phosphoenolpyruvate carboxylase from Nocardia farcinica (strain IFM 10152).